A 132-amino-acid polypeptide reads, in one-letter code: NADPH-dependent 7-cyano-7-deazaguanine reductase (132 aa).

Residue cysteine 43 is the Thioimide intermediate of the active site. Aspartate 50 acts as the Proton donor in catalysis. Residues 65 to 67 (VEL) and 84 to 85 (HE) contribute to the substrate site.

It belongs to the GTP cyclohydrolase I family. QueF type 1 subfamily.

The protein resides in the cytoplasm. It catalyses the reaction 7-aminomethyl-7-carbaguanine + 2 NADP(+) = 7-cyano-7-deazaguanine + 2 NADPH + 3 H(+). It functions in the pathway tRNA modification; tRNA-queuosine biosynthesis. Its function is as follows. Catalyzes the NADPH-dependent reduction of 7-cyano-7-deazaguanine (preQ0) to 7-aminomethyl-7-deazaguanine (preQ1). This chain is NADPH-dependent 7-cyano-7-deazaguanine reductase, found in Thermosynechococcus vestitus (strain NIES-2133 / IAM M-273 / BP-1).